The sequence spans 142 residues: MAAMTVQLDIVSAESSIFSGLVAHLQVSGAEGDLGVMPGHAPLLTHIKPGMARIVKQDGKEEVFYLSGGILEVQPFSVSVLADVVLRAEEIDEQAAVEAKRRAEAHMANAGADFNYAAAAIELAQAIAQLRVVETIKKNIAR.

The protein belongs to the ATPase epsilon chain family. F-type ATPases have 2 components, CF(1) - the catalytic core - and CF(0) - the membrane proton channel. CF(1) has five subunits: alpha(3), beta(3), gamma(1), delta(1), epsilon(1). CF(0) has three main subunits: a, b and c.

The protein localises to the cell inner membrane. Functionally, produces ATP from ADP in the presence of a proton gradient across the membrane. The protein is ATP synthase epsilon chain of Shewanella loihica (strain ATCC BAA-1088 / PV-4).